We begin with the raw amino-acid sequence, 145 residues long: Baseplate protein gp46 (145 aa).

As to quaternary structure, part of a complex composed of three DNA circularization protein N, three baseplate hub protein gp44 and three sub-complex wedge (made of two copies of each baseplate protein gp46, gp47 and gp48) that forms the baseplate.

The protein resides in the virion. It localises to the host cytoplasm. Functionally, component of the baseplate. Probable connector between the central and peripheral parts of the baseplate. Probably involved in tail assembly. In Enterobacteriaceae (Bacteriophage Mu), this protein is Baseplate protein gp46.